We begin with the raw amino-acid sequence, 399 residues long: Glucose-1-phosphate adenylyltransferase (399 aa).

Alpha-D-glucose 1-phosphate contacts are provided by residues tyrosine 100, glycine 165, 180–181 (EK), and serine 191.

It belongs to the bacterial/plant glucose-1-phosphate adenylyltransferase family. Homotetramer.

The catalysed reaction is alpha-D-glucose 1-phosphate + ATP + H(+) = ADP-alpha-D-glucose + diphosphate. It functions in the pathway glycan biosynthesis; glycogen biosynthesis. Involved in the biosynthesis of ADP-glucose, a building block required for the elongation reactions to produce glycogen. Catalyzes the reaction between ATP and alpha-D-glucose 1-phosphate (G1P) to produce pyrophosphate and ADP-Glc. The sequence is that of Glucose-1-phosphate adenylyltransferase from Desulforamulus reducens (strain ATCC BAA-1160 / DSM 100696 / MI-1) (Desulfotomaculum reducens).